A 797-amino-acid polypeptide reads, in one-letter code: Protocadherin beta-11 (797 aa).

Residues 1 to 26 (MENQGTRTQQIRQVLLLFVLLGMSQA) form the signal peptide. Over 27-690 (GSETWSFSVA…AQADSLTVYL (664 aa)) the chain is Extracellular. Cadherin domains follow at residues 35 to 133 (VAEE…SPIF), 138 to 242 (MLLE…SPEF), 247 to 347 (YEVK…APEI), 352 to 451 (ITSP…APTF), and 456 to 561 (YTLF…SPFV). N-linked (GlcNAc...) asparagine glycosylation is found at N418, N436, N487, and N567. The 104-residue stretch at 568–671 (GSAPCTELVP…LVDGFSQPYL (104 aa)) folds into the Cadherin 6 domain. Residues 691-711 (VVALASVSSLFLFSVLLFVAV) traverse the membrane as a helical segment. Topologically, residues 712-797 (RLCRRSRAAS…TFRNSFGFNF (86 aa)) are cytoplasmic.

The protein localises to the cell membrane. Its function is as follows. Potential calcium-dependent cell-adhesion protein. May be involved in the establishment and maintenance of specific neuronal connections in the brain. The polypeptide is Protocadherin beta-11 (PCDHB11) (Homo sapiens (Human)).